Reading from the N-terminus, the 663-residue chain is Probable peptidyl-glycine alpha-amidating monooxygenase pamn-1 (663 aa).

Residues 1 to 21 (MNDRISINLIYLVLTFCCVSA) form the signal peptide. Residues 1–300 (MNDRISINLI…YDAKLDNPYP (300 aa)) form a peptidylglycine alpha-hydroxylating monooxygenase region. H75 and H76 together coordinate Cu(2+). C82 and C98 are disulfide-bonded. H142 provides a ligand contact to Cu(2+). N191 carries an N-linked (GlcNAc...) asparagine glycan. Cystine bridges form between C194–C305 and C261–C283. Residues H210 and H212 each coordinate Cu(2+). An N-linked (GlcNAc...) asparagine glycan is attached at N269. M282 contacts Cu(2+). Residues 301 to 663 (QGAICAKDYP…WQFKIRHDQN (363 aa)) are peptidyl-alpha-hydroxyglycine alpha-amidating lyase. R376 is a binding site for a protein. N411 carries N-linked (GlcNAc...) asparagine glycosylation. NHL repeat units lie at residues 411–454 (NQTK…WKIE), 464–507 (SGEL…LDLN), 511–554 (IRQF…MTTQ), and 626–656 (FGQP…LWQF). Residues C478 and C497 are joined by a disulfide bond. Positions 496 and 543 each coordinate a protein.

In the C-terminal section; belongs to the peptidyl-alpha-hydroxyglycine alpha-amidating lyase family. This sequence in the N-terminal section; belongs to the copper type II ascorbate-dependent monooxygenase family. Monomer. Zn(2+) is required as a cofactor. Cu(2+) serves as cofactor.

It is found in the secreted. The catalysed reaction is a [peptide]-C-terminal glycine + 2 L-ascorbate + O2 = a [peptide]-C-terminal (2S)-2-hydroxyglycine + 2 monodehydro-L-ascorbate radical + H2O. It carries out the reaction a [peptide]-C-terminal (2S)-2-hydroxyglycine = a [peptide]-C-terminal amide + glyoxylate. In terms of biological role, probable bifunctional enzyme that catalyzes 2 sequential steps in C-terminal alpha-amidation of peptides. The monooxygenase part produces an unstable peptidyl(2-hydroxyglycine) intermediate that is dismutated to glyoxylate and the corresponding desglycine peptide amide by the lyase part. C-terminal amidation of peptides such as neuropeptides is essential for full biological activity. This Caenorhabditis elegans protein is Probable peptidyl-glycine alpha-amidating monooxygenase pamn-1.